The primary structure comprises 101 residues: Putative metal transport protein HQ_3622A (101 aa).

An N-terminal signal peptide occupies residues 1-32 (MKIISMSMDSWIQRAALMLLGLVIVAPFFGWT). Residues 75-95 (IGTLISAGVGTVLTLIVAFGA) traverse the membrane as a helical segment.

The protein localises to the cell membrane. May be involved in metal transport. The polypeptide is Putative metal transport protein HQ_3622A (Haloquadratum walsbyi (strain DSM 16790 / HBSQ001)).